The primary structure comprises 539 residues: Membrane protein insertase YidC (539 aa).

The helical transmembrane segment at 6 to 26 threads the bilayer; the sequence is VILAVALSFAVLLGWQFLFPP. The segment at 28–63 is disordered; it reads PQQPAPAQQEQTAQPNQAVDSSVAGPVSNQLPDPAS. Positions 32–45 are enriched in low complexity; it reads APAQQEQTAQPNQA. The segment covering 54-63 has biased composition (polar residues); that stretch reads VSNQLPDPAS. The next 3 helical transmembrane spans lie at 349 to 369, 421 to 441, and 496 to 516; these read YGIAIILLTIVIKILFWPLSH, MLLQIPVFFGLYKALMGTVAL, and IMMFLPLVFTFMFLNFPSGLV.

Belongs to the OXA1/ALB3/YidC family. Type 1 subfamily. In terms of assembly, interacts with the Sec translocase complex via SecD. Specifically interacts with transmembrane segments of nascent integral membrane proteins during membrane integration.

It localises to the cell inner membrane. Required for the insertion and/or proper folding and/or complex formation of integral membrane proteins into the membrane. Involved in integration of membrane proteins that insert both dependently and independently of the Sec translocase complex, as well as at least some lipoproteins. Aids folding of multispanning membrane proteins. This is Membrane protein insertase YidC from Maridesulfovibrio salexigens (strain ATCC 14822 / DSM 2638 / NCIMB 8403 / VKM B-1763) (Desulfovibrio salexigens).